The primary structure comprises 411 residues: cAMP-dependent protein kinase regulatory subunit (411 aa).

The tract at residues 1–144 (MAESAFPSAQ…SWTPPYHEKT (144 aa)) is disordered. A dimerization and phosphorylation region spans residues 23–159 (AAFQKISEED…RLKTAVSSNF (137 aa)). A compositionally biased stretch (low complexity) spans 46–58 (SANAAAASSSTGS). Residues 85-96 (EEDEEGADEFPP) are compositionally biased toward acidic residues. A compositionally biased stretch (polar residues) spans 119 to 136 (TSVSAESLNPTSAGSDSW). The residue at position 120 (Ser120) is a Phosphoserine. Residues 160–289 (LFSH…FLEE), Glu238, Arg247, 292–411 (LLSS…PVPA), Glu359, and Arg368 each bind 3',5'-cyclic AMP.

Belongs to the cAMP-dependent kinase regulatory chain family. Tetramer, composed of 2 regulatory (R) and 2 catalytic (C) subunits. In the presence of cAMP it dissociates into 2 active monomeric C subunits and an R dimer.

In Aspergillus niger, this protein is cAMP-dependent protein kinase regulatory subunit (pkaR).